A 72-amino-acid polypeptide reads, in one-letter code: Translation initiation factor IF-1 (72 aa).

Residues 1-72 form the S1-like domain; the sequence is MSKDDVIEMQ…TRGRITWRAK (72 aa).

It belongs to the IF-1 family. In terms of assembly, component of the 30S ribosomal translation pre-initiation complex which assembles on the 30S ribosome in the order IF-2 and IF-3, IF-1 and N-formylmethionyl-tRNA(fMet); mRNA recruitment can occur at any time during PIC assembly.

The protein localises to the cytoplasm. Functionally, one of the essential components for the initiation of protein synthesis. Stabilizes the binding of IF-2 and IF-3 on the 30S subunit to which N-formylmethionyl-tRNA(fMet) subsequently binds. Helps modulate mRNA selection, yielding the 30S pre-initiation complex (PIC). Upon addition of the 50S ribosomal subunit IF-1, IF-2 and IF-3 are released leaving the mature 70S translation initiation complex. The chain is Translation initiation factor IF-1 from Clostridium beijerinckii (strain ATCC 51743 / NCIMB 8052) (Clostridium acetobutylicum).